Consider the following 238-residue polypeptide: Ribonuclease PH (238 aa).

Residues Arg86 and 124–126 (GTR) each bind phosphate.

Belongs to the RNase PH family. Homohexameric ring arranged as a trimer of dimers.

It carries out the reaction tRNA(n+1) + phosphate = tRNA(n) + a ribonucleoside 5'-diphosphate. Functionally, phosphorolytic 3'-5' exoribonuclease that plays an important role in tRNA 3'-end maturation. Removes nucleotide residues following the 3'-CCA terminus of tRNAs; can also add nucleotides to the ends of RNA molecules by using nucleoside diphosphates as substrates, but this may not be physiologically important. Probably plays a role in initiation of 16S rRNA degradation (leading to ribosome degradation) during starvation. The chain is Ribonuclease PH from Edwardsiella ictaluri (strain 93-146).